The chain runs to 230 residues: UPF0758 protein Glov_0523 (230 aa).

An MPN domain is found at 108 to 230 (RFTSPAQVFD…YFSFVESGLL (123 aa)). Zn(2+) contacts are provided by His-179, His-181, and Asp-192. The JAMM motif motif lies at 179–192 (HNHPSGDPAPSRED).

This sequence belongs to the UPF0758 family.

This chain is UPF0758 protein Glov_0523, found in Trichlorobacter lovleyi (strain ATCC BAA-1151 / DSM 17278 / SZ) (Geobacter lovleyi).